A 473-amino-acid chain; its full sequence is 3-oxoacyl-[acyl-carrier-protein] synthase I, chloroplastic (473 aa).

Residues 1–10 (MQALQSSSLR) show a composition bias toward polar residues. The tract at residues 1 to 26 (MQALQSSSLRASPPNPLRLPSNRQSH) is disordered. Residues 1–46 (MQALQSSSLRASPPNPLRLPSNRQSHQLITNARPLRRQQRSFISAS) constitute a chloroplast transit peptide. Positions 60 to 470 (KKRVVITGMG…GHNSVVAFSA (411 aa)) constitute a Ketosynthase family 3 (KS3) domain. Catalysis depends on for beta-ketoacyl synthase activity residues Cys224, His364, and His400.

Belongs to the thiolase-like superfamily. Beta-ketoacyl-ACP synthases family. As to quaternary structure, homodimer.

It localises to the plastid. It is found in the chloroplast stroma. The enzyme catalyses a fatty acyl-[ACP] + malonyl-[ACP] + H(+) = a 3-oxoacyl-[ACP] + holo-[ACP] + CO2. In terms of biological role, catalyzes the condensation reaction of fatty acid synthesis by the addition to an acyl acceptor of two carbons from malonyl-ACP. Specific for elongation from C-10 to unsaturated C-16 and C-18 fatty acids. This chain is 3-oxoacyl-[acyl-carrier-protein] synthase I, chloroplastic (KAS1), found in Arabidopsis thaliana (Mouse-ear cress).